The primary structure comprises 381 residues: Alkanesulfonate monooxygenase (381 aa).

The protein belongs to the SsuD family. In terms of assembly, homotetramer.

The catalysed reaction is an alkanesulfonate + FMNH2 + O2 = an aldehyde + FMN + sulfite + H2O + 2 H(+). Its function is as follows. Catalyzes the desulfonation of aliphatic sulfonates. In Escherichia coli (strain SE11), this protein is Alkanesulfonate monooxygenase.